We begin with the raw amino-acid sequence, 124 residues long: ATP synthase epsilon chain (124 aa).

It belongs to the ATPase epsilon chain family. In terms of assembly, F-type ATPases have 2 components, CF(1) - the catalytic core - and CF(0) - the membrane proton channel. CF(1) has five subunits: alpha(3), beta(3), gamma(1), delta(1), epsilon(1). CF(0) has three main subunits: a, b and c.

It localises to the cell membrane. Produces ATP from ADP in the presence of a proton gradient across the membrane. The polypeptide is ATP synthase epsilon chain (Corynebacterium glutamicum (strain ATCC 13032 / DSM 20300 / JCM 1318 / BCRC 11384 / CCUG 27702 / LMG 3730 / NBRC 12168 / NCIMB 10025 / NRRL B-2784 / 534)).